A 242-amino-acid polypeptide reads, in one-letter code: Aspartate/glutamate leucyltransferase (242 aa).

The protein belongs to the R-transferase family. Bpt subfamily.

The protein resides in the cytoplasm. It catalyses the reaction N-terminal L-glutamyl-[protein] + L-leucyl-tRNA(Leu) = N-terminal L-leucyl-L-glutamyl-[protein] + tRNA(Leu) + H(+). The enzyme catalyses N-terminal L-aspartyl-[protein] + L-leucyl-tRNA(Leu) = N-terminal L-leucyl-L-aspartyl-[protein] + tRNA(Leu) + H(+). Its function is as follows. Functions in the N-end rule pathway of protein degradation where it conjugates Leu from its aminoacyl-tRNA to the N-termini of proteins containing an N-terminal aspartate or glutamate. This Chromobacterium violaceum (strain ATCC 12472 / DSM 30191 / JCM 1249 / CCUG 213 / NBRC 12614 / NCIMB 9131 / NCTC 9757 / MK) protein is Aspartate/glutamate leucyltransferase.